Here is a 544-residue protein sequence, read N- to C-terminus: Membrane protein insertase YidC (544 aa).

6 helical membrane passes run Leu13–Leu33, Leu321–Pro341, Trp343–Phe363, Leu409–Val429, Leu461–Leu481, and Met506–Ile526.

Belongs to the OXA1/ALB3/YidC family. Type 1 subfamily. As to quaternary structure, interacts with the Sec translocase complex via SecD. Specifically interacts with transmembrane segments of nascent integral membrane proteins during membrane integration.

The protein resides in the cell inner membrane. Required for the insertion and/or proper folding and/or complex formation of integral membrane proteins into the membrane. Involved in integration of membrane proteins that insert both dependently and independently of the Sec translocase complex, as well as at least some lipoproteins. Aids folding of multispanning membrane proteins. The protein is Membrane protein insertase YidC of Borreliella afzelii (strain PKo) (Borrelia afzelii).